The following is a 213-amino-acid chain: Small ribosomal subunit protein uS4 (213 aa).

An S4 RNA-binding domain is found at 97–165 (RRLDNVVYRM…AKEQLRIKNA (69 aa)).

Belongs to the universal ribosomal protein uS4 family. In terms of assembly, part of the 30S ribosomal subunit. Contacts protein S5. The interaction surface between S4 and S5 is involved in control of translational fidelity.

In terms of biological role, one of the primary rRNA binding proteins, it binds directly to 16S rRNA where it nucleates assembly of the body of the 30S subunit. Functionally, with S5 and S12 plays an important role in translational accuracy. This chain is Small ribosomal subunit protein uS4, found in Psychrobacter sp. (strain PRwf-1).